Consider the following 191-residue polypeptide: Heme-binding protein 1 (191 aa).

This sequence belongs to the HEBP family. Monomer.

It is found in the cytoplasm. In terms of biological role, may bind free porphyrinogens that may be present in the cell and thus facilitate removal of these potentially toxic compound. Binds with a high affinity to one molecule of heme or porphyrins. It binds metalloporphyrins, free porphyrins and N-methylprotoporphyrin with similar affinities. The polypeptide is Heme-binding protein 1 (HEBP1) (Bos taurus (Bovine)).